We begin with the raw amino-acid sequence, 311 residues long: Pyrimidine-specific ribonucleoside hydrolase RihA (311 aa).

Histidine 240 is a catalytic residue.

This sequence belongs to the IUNH family. RihA subfamily.

Hydrolyzes with equal efficiency cytidine or uridine to ribose and cytosine or uracil, respectively. This Escherichia coli O157:H7 protein is Pyrimidine-specific ribonucleoside hydrolase RihA.